Reading from the N-terminus, the 510-residue chain is Bifunctional pantoate ligase/cytidylate kinase (510 aa).

The segment at 1–276 (MKKVIIRKTE…CGETRLIDHV (276 aa)) is pantoate--beta-alanine ligase. Position 29 to 36 (29 to 36 (MGNLHNGH)) interacts with ATP. His36 functions as the Proton donor in the catalytic mechanism. A (R)-pantoate-binding site is contributed by Gln61. Gln61 lines the beta-alanine pocket. ATP is bound at residue 150–153 (GEKD). Gln156 is a binding site for (R)-pantoate. ATP is bound at residue 187–190 (LSSR). The interval 277–510 (FLMKRSPIIA…DKIPKETQIR (234 aa)) is cytidylate kinase.

The protein in the N-terminal section; belongs to the pantothenate synthetase family. It in the C-terminal section; belongs to the cytidylate kinase family. Type 1 subfamily.

Its subcellular location is the cytoplasm. The catalysed reaction is (R)-pantoate + beta-alanine + ATP = (R)-pantothenate + AMP + diphosphate + H(+). It catalyses the reaction CMP + ATP = CDP + ADP. It carries out the reaction dCMP + ATP = dCDP + ADP. It functions in the pathway cofactor biosynthesis; (R)-pantothenate biosynthesis; (R)-pantothenate from (R)-pantoate and beta-alanine: step 1/1. Catalyzes the condensation of pantoate with beta-alanine in an ATP-dependent reaction via a pantoyl-adenylate intermediate. Functionally, catalyzes the transfer of a phosphate group from ATP to either CMP or dCMP to form CDP or dCDP and ADP, respectively. The chain is Bifunctional pantoate ligase/cytidylate kinase from Prochlorococcus marinus (strain MIT 9312).